The sequence spans 240 residues: MKILLIGYGAMNQRVARLAEEKGHEIVGVIENTPKATTPYQQYQHIADVKDADVAIDFSNPNLLFPLLDEAFHLPLVVATTGEKEKLLNKLDELSKNMPVFFSANMSYGVHALTKILAAAVPLLDDFDIELTEAHHNKKVDAPSGTLEKLYDVIVSLKENVTPVYDRHELNEKRQPQDIGIHSIRGGTIVGEHEVLFAGTDETIQITHRAQSKDIFANGAIQAAERLVNKPNGFYTFDNL.

NAD(+) is bound by residues 79-81 (ATT) and 103-106 (SANM). H135 acts as the Proton donor/acceptor in catalysis. H136 contacts (S)-2,3,4,5-tetrahydrodipicolinate. K139 acts as the Proton donor in catalysis. (S)-2,3,4,5-tetrahydrodipicolinate is bound at residue 145–146 (GT).

Belongs to the DapB family.

It localises to the cytoplasm. The enzyme catalyses (S)-2,3,4,5-tetrahydrodipicolinate + NAD(+) + H2O = (2S,4S)-4-hydroxy-2,3,4,5-tetrahydrodipicolinate + NADH + H(+). The catalysed reaction is (S)-2,3,4,5-tetrahydrodipicolinate + NADP(+) + H2O = (2S,4S)-4-hydroxy-2,3,4,5-tetrahydrodipicolinate + NADPH + H(+). Its pathway is amino-acid biosynthesis; L-lysine biosynthesis via DAP pathway; (S)-tetrahydrodipicolinate from L-aspartate: step 4/4. Catalyzes the conversion of 4-hydroxy-tetrahydrodipicolinate (HTPA) to tetrahydrodipicolinate. The protein is 4-hydroxy-tetrahydrodipicolinate reductase of Staphylococcus aureus (strain MRSA252).